The following is a 259-amino-acid chain: UPF0246 protein Aave_1172 (259 aa).

The protein belongs to the UPF0246 family.

This Paracidovorax citrulli (strain AAC00-1) (Acidovorax citrulli) protein is UPF0246 protein Aave_1172.